The chain runs to 477 residues: Bifunctional protein HldE (477 aa).

The interval 1–318 (MKVTLPEFER…ENAVRGRADT (318 aa)) is ribokinase. Lys179 carries the post-translational modification N6-acetyllysine. ATP is bound at residue 195–198 (NLSE). Asp264 is a catalytic residue. The interval 344–477 (MTNGVFDILH…IKKIQQDKKG (134 aa)) is cytidylyltransferase.

In the N-terminal section; belongs to the carbohydrate kinase PfkB family. This sequence in the C-terminal section; belongs to the cytidylyltransferase family. In terms of assembly, homodimer.

It carries out the reaction D-glycero-beta-D-manno-heptose 7-phosphate + ATP = D-glycero-beta-D-manno-heptose 1,7-bisphosphate + ADP + H(+). It catalyses the reaction D-glycero-beta-D-manno-heptose 1-phosphate + ATP + H(+) = ADP-D-glycero-beta-D-manno-heptose + diphosphate. It functions in the pathway nucleotide-sugar biosynthesis; ADP-L-glycero-beta-D-manno-heptose biosynthesis; ADP-L-glycero-beta-D-manno-heptose from D-glycero-beta-D-manno-heptose 7-phosphate: step 1/4. Its pathway is nucleotide-sugar biosynthesis; ADP-L-glycero-beta-D-manno-heptose biosynthesis; ADP-L-glycero-beta-D-manno-heptose from D-glycero-beta-D-manno-heptose 7-phosphate: step 3/4. It participates in bacterial outer membrane biogenesis; LPS core biosynthesis. Catalyzes the phosphorylation of D-glycero-D-manno-heptose 7-phosphate at the C-1 position to selectively form D-glycero-beta-D-manno-heptose-1,7-bisphosphate. Its function is as follows. Catalyzes the ADP transfer from ATP to D-glycero-beta-D-manno-heptose 1-phosphate, yielding ADP-D-glycero-beta-D-manno-heptose. In Escherichia coli O157:H7, this protein is Bifunctional protein HldE.